Here is an 885-residue protein sequence, read N- to C-terminus: Protein kintoun (885 aa).

6 disordered regions span residues 208–235, 371–390, 607–636, 644–663, 781–806, and 819–871; these read LSKN…ADAG, LSRE…PVED, ELQQ…ESAC, EHHE…QRSY, RRLS…QPAH, and NNNH…MMFE. Residues 213-232 show a composition bias toward basic and acidic residues; sequence TAEEKEPHPLEHMYPKKPEA. At Ser376 the chain carries Phosphoserine. A compositionally biased stretch (basic residues) spans 612-629; the sequence is HHQKKLNKKQRKRNKKQR. Ser784 bears the Phosphoserine mark. The span at 824–837 shows a compositional bias: basic and acidic residues; it reads HVKDNKKQSLHDSG. Positions 842–855 are enriched in low complexity; it reads NGSINNKNNHSNEN.

Belongs to the PIH1 family. Kintoun subfamily. Interacts with Pp1alpha-96A, Pp1-87B, Pp1-13C and flw.

The protein localises to the cytoplasm. Functionally, required for cytoplasmic pre-assembly of axonemal dyneins, thereby playing a central role in motility in cilia and flagella. Involved in pre-assembly of dynein arm complexes in the cytoplasm before intraflagellar transport loads them for the ciliary compartment. This is Protein kintoun from Drosophila mojavensis (Fruit fly).